Consider the following 552-residue polypeptide: ATP synthase subunit alpha (552 aa).

173–180 is a binding site for ATP; it reads GDRQTGKT. A disordered region spans residues 516–552; sequence DGKPLVNEPAPSPLDPGLVRQESIPVHRPAARKDDEG.

This sequence belongs to the ATPase alpha/beta chains family. As to quaternary structure, F-type ATPases have 2 components, CF(1) - the catalytic core - and CF(0) - the membrane proton channel. CF(1) has five subunits: alpha(3), beta(3), gamma(1), delta(1), epsilon(1). CF(0) has three main subunits: a(1), b(2) and c(9-12). The alpha and beta chains form an alternating ring which encloses part of the gamma chain. CF(1) is attached to CF(0) by a central stalk formed by the gamma and epsilon chains, while a peripheral stalk is formed by the delta and b chains.

The protein localises to the cell membrane. It carries out the reaction ATP + H2O + 4 H(+)(in) = ADP + phosphate + 5 H(+)(out). Functionally, produces ATP from ADP in the presence of a proton gradient across the membrane. The alpha chain is a regulatory subunit. In Frankia casuarinae (strain DSM 45818 / CECT 9043 / HFP020203 / CcI3), this protein is ATP synthase subunit alpha.